A 738-amino-acid polypeptide reads, in one-letter code: AP-4 complex subunit beta-1 (738 aa).

The segment at 534 to 600 is hinge; the sequence is CSPKSDPSLG…NASFATSGHL (67 aa). Positions 601–738 are ear; mediates interaction with TEPSIN; the sequence is ISEENKEGAQ…VIGTVGDIKS (138 aa).

It belongs to the adaptor complexes large subunit family. In terms of assembly, adaptor protein complex 4 (AP-4) is a heterotetramer composed of two large adaptins (epsilon-type subunit AP4E1 and beta-type subunit AP4B1), a medium adaptin (mu-type subunit AP4M1) and a small adaptin (sigma-type AP4S1). Interacts with TEPSIN; this interaction requires the presence of a functional AP-4 complex. Interacts with GRIA2; probably indirect it mediates the somatodendritic localization of GRIA2 in neurons.

Its subcellular location is the golgi apparatus. It localises to the trans-Golgi network membrane. Its function is as follows. Component of the adaptor protein complex 4 (AP-4). Adaptor protein complexes are vesicle coat components involved both in vesicle formation and cargo selection. They control the vesicular transport of proteins in different trafficking pathways. AP-4 forms a non clathrin-associated coat on vesicles departing the trans-Golgi network (TGN) and may be involved in the targeting of proteins from the trans-Golgi network (TGN) to the endosomal-lysosomal system. It is also involved in protein sorting to the basolateral membrane in epithelial cells and the proper asymmetric localization of somatodendritic proteins in neurons. AP-4 is involved in the recognition and binding of tyrosine-based sorting signals found in the cytoplasmic part of cargos, but may also recognize other types of sorting signal. This is AP-4 complex subunit beta-1 from Mus musculus (Mouse).